The chain runs to 130 residues: Riboflavin kinase (130 aa).

Residue 10 to 15 participates in CDP binding; it reads GFGEGK. 2 residues coordinate Mg(2+): Thr39 and Asn41. Residues Thr96 and Glu104 each coordinate FMN. A CDP-binding site is contributed by 109–112; sequence VNLR.

The protein belongs to the archaeal riboflavin kinase family. The cofactor is Mg(2+).

It catalyses the reaction riboflavin + CTP = CDP + FMN + H(+). Its pathway is cofactor biosynthesis; FMN biosynthesis; FMN from riboflavin (CTP route): step 1/1. Catalyzes the CTP-dependent phosphorylation of riboflavin (vitamin B2) to form flavin mononucleotide (FMN). The sequence is that of Riboflavin kinase from Methanococcus vannielii (strain ATCC 35089 / DSM 1224 / JCM 13029 / OCM 148 / SB).